The chain runs to 469 residues: 3-isopropylmalate dehydratase large subunit (469 aa).

Positions 347, 407, and 410 each coordinate [4Fe-4S] cluster.

The protein belongs to the aconitase/IPM isomerase family. LeuC type 1 subfamily. In terms of assembly, heterodimer of LeuC and LeuD. It depends on [4Fe-4S] cluster as a cofactor.

The catalysed reaction is (2R,3S)-3-isopropylmalate = (2S)-2-isopropylmalate. It functions in the pathway amino-acid biosynthesis; L-leucine biosynthesis; L-leucine from 3-methyl-2-oxobutanoate: step 2/4. Catalyzes the isomerization between 2-isopropylmalate and 3-isopropylmalate, via the formation of 2-isopropylmaleate. This is 3-isopropylmalate dehydratase large subunit from Prochlorococcus marinus (strain NATL1A).